The primary structure comprises 243 residues: tRNA (guanine-N(1)-)-methyltransferase (243 aa).

S-adenosyl-L-methionine is bound by residues glycine 111 and 131–136; that span reads IGDYVL.

Belongs to the RNA methyltransferase TrmD family. Homodimer.

It is found in the cytoplasm. The catalysed reaction is guanosine(37) in tRNA + S-adenosyl-L-methionine = N(1)-methylguanosine(37) in tRNA + S-adenosyl-L-homocysteine + H(+). Specifically methylates guanosine-37 in various tRNAs. This Brevibacillus brevis (strain 47 / JCM 6285 / NBRC 100599) protein is tRNA (guanine-N(1)-)-methyltransferase.